The following is a 528-amino-acid chain: Probable feruloyl esterase B-1 (528 aa).

The first 19 residues, 1–19 (MMWWFLLIGLASAAATASS), serve as a signal peptide directing secretion. Cystine bridges form between Cys-29–Cys-78, Cys-64–Cys-117, Cys-190–Cys-445, Cys-259–Cys-276, Cys-285–Cys-295, and Cys-505–Cys-527. Residues Asn-83 and Asn-101 are each glycosylated (N-linked (GlcNAc...) asparagine). The active-site Acyl-ester intermediate is the Ser-191. Ca(2+) contacts are provided by Asp-260, Asp-263, Ala-265, Asp-267, and Ile-269. N-linked (GlcNAc...) asparagine glycosylation is found at Asn-286, Asn-354, and Asn-385. Residues Asp-404 and His-444 each act as charge relay system in the active site.

This sequence belongs to the tannase family.

The protein resides in the secreted. It catalyses the reaction feruloyl-polysaccharide + H2O = ferulate + polysaccharide.. In terms of biological role, involved in degradation of plant cell walls. Hydrolyzes the feruloyl-arabinose ester bond in arabinoxylans as well as the feruloyl-galactose and feruloyl-arabinose ester bonds in pectin. The chain is Probable feruloyl esterase B-1 (faeB-1) from Aspergillus fumigatus (strain CBS 144.89 / FGSC A1163 / CEA10) (Neosartorya fumigata).